A 393-amino-acid chain; its full sequence is S-adenosylmethionine synthase (393 aa).

Position 16 (H16) interacts with ATP. D18 lines the Mg(2+) pocket. Residue E44 coordinates K(+). E57 and Q100 together coordinate L-methionine. The flexible loop stretch occupies residues 100-110 (QSNDIAQGVDH). ATP contacts are provided by residues 167–169 (DAK), 238–239 (RF), D247, 253–254 (RK), A270, and K274. D247 contributes to the L-methionine binding site. K278 contributes to the L-methionine binding site.

The protein belongs to the AdoMet synthase family. As to quaternary structure, homotetramer; dimer of dimers. Mg(2+) is required as a cofactor. It depends on K(+) as a cofactor.

The protein resides in the cytoplasm. It carries out the reaction L-methionine + ATP + H2O = S-adenosyl-L-methionine + phosphate + diphosphate. It functions in the pathway amino-acid biosynthesis; S-adenosyl-L-methionine biosynthesis; S-adenosyl-L-methionine from L-methionine: step 1/1. Its function is as follows. Catalyzes the formation of S-adenosylmethionine (AdoMet) from methionine and ATP. The overall synthetic reaction is composed of two sequential steps, AdoMet formation and the subsequent tripolyphosphate hydrolysis which occurs prior to release of AdoMet from the enzyme. The chain is S-adenosylmethionine synthase from Polaromonas sp. (strain JS666 / ATCC BAA-500).